The following is a 1013-amino-acid chain: Prominin-like protein (1013 aa).

Residues 32-52 (IAYLAICGLSVAIFGFALATL) form a helical membrane-spanning segment. 2 N-linked (GlcNAc...) asparagine glycosylation sites follow: Asn-99 and Asn-116. The next 3 helical transmembrane spans lie at 215 to 235 (CGIC…IAFV), 489 to 509 (VVSL…IFAL), and 535 to 555 (LLLA…VGLF). 4 N-linked (GlcNAc...) asparagine glycosylation sites follow: Asn-576, Asn-618, Asn-803, and Asn-824. A helical membrane pass occupies residues 852–872 (INGFWVGILLCALLFLPILFV). A disordered region spans residues 918-1013 (ANVPKKRRKA…YYYPGASEQD (96 aa)). A glycan (N-linked (GlcNAc...) asparagine) is linked at Asn-949. Residues 950–963 (RSGGDRGGGGGDGA) show a composition bias toward gly residues.

This sequence belongs to the prominin family.

The protein localises to the membrane. In Drosophila melanogaster (Fruit fly), this protein is Prominin-like protein.